Reading from the N-terminus, the 295-residue chain is Iron-sulfur cluster carrier protein (295 aa).

An ATP-binding site is contributed by 38 to 45; sequence GKGGVGKS.

It belongs to the Mrp/NBP35 ATP-binding proteins family. As to quaternary structure, homodimer.

Functionally, binds and transfers iron-sulfur (Fe-S) clusters to target apoproteins. Can hydrolyze ATP. The polypeptide is Iron-sulfur cluster carrier protein (Pyrococcus horikoshii (strain ATCC 700860 / DSM 12428 / JCM 9974 / NBRC 100139 / OT-3)).